The sequence spans 2045 residues: Non-reducing polyketide synthase pks27 (2045 aa).

Positions 10–247 (IVFGDLTCDS…LTIPIYAPYH (238 aa)) are N-terminal acylcarrier protein transacylase domain (SAT). In terms of domain architecture, Ketosynthase family 3 (KS3) spans 380–813 (HSKLAIIGYS…GGNSSVLIED (434 aa)). Catalysis depends on for beta-ketoacyl synthase activity residues Cys-552, His-687, and His-731. Residues 913 to 1213 (FAFTGQGSQY…VPTLQRNKDT (301 aa)) are malonyl-CoA:ACP transacylase (MAT) domain. The N-terminal hotdog fold stretch occupies residues 1289-1422 (HKLVEEKKDG…ASITFPDAKA (134 aa)). Residues 1289–1599 (HKLVEEKKDG…AQGVPRRLMD (311 aa)) enclose the PKS/mFAS DH domain. Catalysis depends on His-1321, which acts as the Proton acceptor; for dehydratase activity. The C-terminal hotdog fold stretch occupies residues 1442–1599 (AARLNTDDRV…AQGVPRRLMD (158 aa)). Catalysis depends on Asp-1511, which acts as the Proton donor; for dehydratase activity. The segment at 1612 to 1636 (APAGGTLNASQSAAANPAADPSAQA) is disordered. Over residues 1619–1636 (NASQSAAANPAADPSAQA) the composition is skewed to low complexity. Residues 1635–1712 (QADSDNWQAA…ELEAFWKQGA (78 aa)) enclose the Carrier domain. The interval 1640–1709 (NWQAALKIIS…TIKELEAFWK (70 aa)) is product template (PT) domain. Ser-1672 carries the post-translational modification O-(pantetheine 4'-phosphoryl)serine. The segment at 1735 to 1776 (EAEVDQDKNSSDEDRSSLGTSSYEVISPNTTETTPEITKTSS) is disordered. Positions 1739 to 1750 (DQDKNSSDEDRS) are enriched in basic and acidic residues. The span at 1760–1776 (ISPNTTETTPEITKTSS) shows a compositional bias: low complexity. Residues 1798–2039 (TLFLLPDGSG…AKRLSEMIEG (242 aa)) are thioesterase.

Requires pantetheine 4'-phosphate as cofactor.

The protein operates within secondary metabolite biosynthesis. In terms of biological role, non-reducing polyketide synthase (NRPKS); part of the gene cluster 27 that mediates the biosynthesis of asparasone A, a sclerotium-specific anthraquinone pigment important for sclerotial survival. Catalyzes the formation of the aromatic polyketide from acetyl coenzyme A and seven malonyl coenzyme A molecules. Through its product template (PT) domain, catalyzes the cyclization of polyketide backbone via C6-C11 aldolcondensation. The sequence is that of Non-reducing polyketide synthase pks27 from Aspergillus flavus (strain ATCC 200026 / FGSC A1120 / IAM 13836 / NRRL 3357 / JCM 12722 / SRRC 167).